Here is a 465-residue protein sequence, read N- to C-terminus: ATP synthase subunit beta (465 aa).

An ATP-binding site is contributed by 151-158 (GGAGVGKT).

The protein belongs to the ATPase alpha/beta chains family. F-type ATPases have 2 components, CF(1) - the catalytic core - and CF(0) - the membrane proton channel. CF(1) has five subunits: alpha(3), beta(3), gamma(1), delta(1), epsilon(1). CF(0) has four main subunits: a(1), b(1), b'(1) and c(9-12).

The protein resides in the cell inner membrane. It catalyses the reaction ATP + H2O + 4 H(+)(in) = ADP + phosphate + 5 H(+)(out). In terms of biological role, produces ATP from ADP in the presence of a proton gradient across the membrane. The catalytic sites are hosted primarily by the beta subunits. In Chloroherpeton thalassium (strain ATCC 35110 / GB-78), this protein is ATP synthase subunit beta.